Reading from the N-terminus, the 619-residue chain is Enolase 4 (619 aa).

Basic and acidic residues predominate over residues 173-184 (DKERKELEKSQE). Positions 173 to 236 (DKERKELEKS…PPEPPEPVLH (64 aa)) are disordered. The span at 188–206 (PAPPPVTLPPPPPPPPPPP) shows a compositional bias: pro residues. Glutamate 302 contacts substrate. The tract at residues 333–354 (TLPPPKQETKKGHNGSKRAQPP) is disordered. Residue lysine 497 is the Proton acceptor of the active site. Lysine 548 contacts substrate.

This sequence belongs to the enolase family. In terms of assembly, interacts with ENO1. Isoform 1 and isoform 4 interact with AKAP4. In terms of processing, synthesized as an approximately 70-kDa precursor, which then undergoes proteolytic cleavage to an approximately 60-kDa enzyme; HOATZ associates directly or indirectly with ENO4 to mediate this process before its transport to mature flagella. Testis-specific. Expressed in spermatids and ependyma (at protein level). As to expression, expressed at higher levels in late spermatids than in pachytene spermatocytes. In terms of tissue distribution, expressed at higher levels in pachytene spermatocytes than in late spermatids.

The catalysed reaction is (2R)-2-phosphoglycerate = phosphoenolpyruvate + H2O. Its pathway is carbohydrate degradation; glycolysis; pyruvate from D-glyceraldehyde 3-phosphate: step 4/5. In terms of biological role, required for sperm motility, function and male fertility. May be involved in the normal assembly of the sperm fibrous sheath and provides most of the enolase activity in sperm. In Mus musculus (Mouse), this protein is Enolase 4 (Eno4).